Consider the following 219-residue polypeptide: Phosphate-specific transport system accessory protein PhoU homolog 1 (219 aa).

Belongs to the PhoU family. Homodimer.

It is found in the cytoplasm. In terms of biological role, plays a role in the regulation of phosphate uptake. The chain is Phosphate-specific transport system accessory protein PhoU homolog 1 from Methanothermobacter thermautotrophicus (strain ATCC 29096 / DSM 1053 / JCM 10044 / NBRC 100330 / Delta H) (Methanobacterium thermoautotrophicum).